A 242-amino-acid chain; its full sequence is Tryptophan synthase alpha chain (242 aa).

Active-site proton acceptor residues include E31 and D42.

It belongs to the TrpA family. In terms of assembly, tetramer of two alpha and two beta chains.

It carries out the reaction (1S,2R)-1-C-(indol-3-yl)glycerol 3-phosphate + L-serine = D-glyceraldehyde 3-phosphate + L-tryptophan + H2O. It participates in amino-acid biosynthesis; L-tryptophan biosynthesis; L-tryptophan from chorismate: step 5/5. The alpha subunit is responsible for the aldol cleavage of indoleglycerol phosphate to indole and glyceraldehyde 3-phosphate. This Staphylococcus aureus (strain USA300) protein is Tryptophan synthase alpha chain.